The chain runs to 655 residues: Bifunctional lysine-specific demethylase and histidyl-hydroxylase NO66 (655 aa).

Residues 1–16 are compositionally biased toward polar residues; that stretch reads MEKVTNSAAAKPQGNN. 2 disordered regions span residues 1–48 and 67–122; these read MEKV…LSDM and EDTD…QGAS. A compositionally biased stretch (low complexity) spans 76–86; it reads STSSKEAAAAK. Residues 87-96 are compositionally biased toward basic and acidic residues; the sequence is TADHERRLQA. S131 is modified (phosphoserine). Residue T137 is modified to Phosphothreonine. Position 138 is a phosphoserine (S138). The disordered stretch occupies residues 185 to 210; that stretch reads KAPEEGNNNNDEKEMSTETSEPHKTD. Residues 194–210 show a composition bias toward basic and acidic residues; sequence NDEKEMSTETSEPHKTD. One can recognise a JmjC domain in the interval 307–452; the sequence is CSIRLLHASA…NLLETLMPMV (146 aa). H353, D355, and H418 together coordinate Fe cation.

This sequence belongs to the ROX family. NO66 subfamily. It depends on Fe(2+) as a cofactor.

It localises to the nucleus. The enzyme catalyses N(6),N(6)-dimethyl-L-lysyl(36)-[histone H3] + 2 2-oxoglutarate + 2 O2 = L-lysyl(36)-[histone H3] + 2 formaldehyde + 2 succinate + 2 CO2. Its function is as follows. Oxygenase that can act as both a histone lysine demethylase and a ribosomal histidine hydroxylase. Specifically demethylates 'Lys-4' (H3K4me) and 'Lys-36' (H3K36me) of histone H3, thereby playing a central role in histone code. The protein is Bifunctional lysine-specific demethylase and histidyl-hydroxylase NO66 of Drosophila sechellia (Fruit fly).